A 341-amino-acid chain; its full sequence is Dye-decolorizing peroxidase (341 aa).

Aspartate 148 serves as the catalytic Proton acceptor. A heme-binding site is contributed by histidine 221. Residues 304–341 form a targeting peptide region; the sequence is FLDDPPDAPTRLVPEATFTAPISDGSLGIGSLKRSAQQ.

Belongs to the DyP-type peroxidase family. In terms of assembly, homohexamer. Requires heme b as cofactor.

The protein resides in the encapsulin nanocompartment. Functionally, cargo protein of a type 1 encapsulin nanocompartment. Has both general peroxidase activity and dye-decolorizing activity. Can catalyze the oxidation of both protoporphyrinogen IX and coproporphyrinogen III to their corresponding porphyrins. Also efficiently decolorizes the dyes alizarin red and Cibacron blue F3GA. This cargo-loaded encapsulin nanocompartment is probably involved in protection against oxidative damage. The protein is Dye-decolorizing peroxidase of Rhodococcus erythropolis (strain PR4 / NBRC 100887).